We begin with the raw amino-acid sequence, 233 residues long: Histone H1-I (233 aa).

2 disordered regions span residues 1–55 and 115–233; these read MSDS…HPPV and TGAS…KKSK. Over residues 17–29 the composition is skewed to low complexity; it reads KAATPAKSPAKSP. The 75-residue stretch at 51–125 folds into the H15 domain; it reads THPPVSEMVV…GASGSFKMPP (75 aa). 2 stretches are compositionally biased toward basic and acidic residues: residues 128–137 and 144–155; these read KKVDKPEAAP and PKREIEKKEKKV. Basic residues-rich tracts occupy residues 172–186, 199–213, and 223–233; these read AAKK…KKAA, SPKK…KPTP, and AAAKKPAKKSK.

It belongs to the histone H1/H5 family.

The protein resides in the nucleus. Its subcellular location is the chromosome. Its function is as follows. Histones H1 are necessary for the condensation of nucleosome chains into higher-order structures. This chain is Histone H1-I, found in Glyptotendipes salinus (Midge).